Consider the following 481-residue polypeptide: Aspartyl/glutamyl-tRNA(Asn/Gln) amidotransferase subunit B (481 aa).

Belongs to the GatB/GatE family. GatB subfamily. As to quaternary structure, heterotrimer of A, B and C subunits.

It catalyses the reaction L-glutamyl-tRNA(Gln) + L-glutamine + ATP + H2O = L-glutaminyl-tRNA(Gln) + L-glutamate + ADP + phosphate + H(+). The enzyme catalyses L-aspartyl-tRNA(Asn) + L-glutamine + ATP + H2O = L-asparaginyl-tRNA(Asn) + L-glutamate + ADP + phosphate + 2 H(+). Its function is as follows. Allows the formation of correctly charged Asn-tRNA(Asn) or Gln-tRNA(Gln) through the transamidation of misacylated Asp-tRNA(Asn) or Glu-tRNA(Gln) in organisms which lack either or both of asparaginyl-tRNA or glutaminyl-tRNA synthetases. The reaction takes place in the presence of glutamine and ATP through an activated phospho-Asp-tRNA(Asn) or phospho-Glu-tRNA(Gln). This Prosthecochloris aestuarii (strain DSM 271 / SK 413) protein is Aspartyl/glutamyl-tRNA(Asn/Gln) amidotransferase subunit B.